Here is a 257-residue protein sequence, read N- to C-terminus: tRNA (guanine-N(1)-)-methyltransferase (257 aa).

Residues Gly-113 and 133–138 (IGDYVL) each bind S-adenosyl-L-methionine.

This sequence belongs to the RNA methyltransferase TrmD family. Homodimer.

It localises to the cytoplasm. It catalyses the reaction guanosine(37) in tRNA + S-adenosyl-L-methionine = N(1)-methylguanosine(37) in tRNA + S-adenosyl-L-homocysteine + H(+). In terms of biological role, specifically methylates guanosine-37 in various tRNAs. The protein is tRNA (guanine-N(1)-)-methyltransferase of Cronobacter sakazakii (strain ATCC BAA-894) (Enterobacter sakazakii).